The following is a 439-amino-acid chain: Tol-Pal system protein TolB (439 aa).

The N-terminal stretch at 1–24 (MRNGMRKIIAGVFIFVFLISNLYA) is a signal peptide.

This sequence belongs to the TolB family. In terms of assembly, the Tol-Pal system is composed of five core proteins: the inner membrane proteins TolA, TolQ and TolR, the periplasmic protein TolB and the outer membrane protein Pal. They form a network linking the inner and outer membranes and the peptidoglycan layer.

It is found in the periplasm. In terms of biological role, part of the Tol-Pal system, which plays a role in outer membrane invagination during cell division and is important for maintaining outer membrane integrity. This chain is Tol-Pal system protein TolB, found in Francisella tularensis subsp. tularensis (strain FSC 198).